The chain runs to 791 residues: Phenylalanine--tRNA ligase beta subunit (791 aa).

Residues 39 to 148 (AADFSGVVVA…ADAPVGADIR (110 aa)) enclose the tRNA-binding domain. A B5 domain is found at 401 to 476 (PLRAPVRLRE…RVYGYDAIPR (76 aa)). Asp454, Asp460, Glu463, and Glu464 together coordinate Mg(2+). Residues 697 to 790 (SRFPLVRRDL…LAADFGAKLR (94 aa)) form the FDX-ACB domain.

The protein belongs to the phenylalanyl-tRNA synthetase beta subunit family. Type 1 subfamily. As to quaternary structure, tetramer of two alpha and two beta subunits. Mg(2+) serves as cofactor.

It is found in the cytoplasm. The catalysed reaction is tRNA(Phe) + L-phenylalanine + ATP = L-phenylalanyl-tRNA(Phe) + AMP + diphosphate + H(+). This Methylococcus capsulatus (strain ATCC 33009 / NCIMB 11132 / Bath) protein is Phenylalanine--tRNA ligase beta subunit.